The primary structure comprises 340 residues: L-threonine 3-dehydrogenase (340 aa).

Residue Cys38 coordinates Zn(2+). Active-site charge relay system residues include Thr40 and His43. Residues His63, Glu64, Cys93, Cys96, Cys99, and Cys107 each contribute to the Zn(2+) site. Residues Ile175, Asp195, Arg200, 261-263 (LGI), and 285-286 (IY) each bind NAD(+).

Belongs to the zinc-containing alcohol dehydrogenase family. As to quaternary structure, homotetramer. The cofactor is Zn(2+).

The protein resides in the cytoplasm. It catalyses the reaction L-threonine + NAD(+) = (2S)-2-amino-3-oxobutanoate + NADH + H(+). It functions in the pathway amino-acid degradation; L-threonine degradation via oxydo-reductase pathway; glycine from L-threonine: step 1/2. Its function is as follows. Catalyzes the NAD(+)-dependent oxidation of L-threonine to 2-amino-3-ketobutyrate. The protein is L-threonine 3-dehydrogenase of Xanthomonas euvesicatoria pv. vesicatoria (strain 85-10) (Xanthomonas campestris pv. vesicatoria).